A 542-amino-acid chain; its full sequence is Chaperonin GroEL (542 aa).

ATP is bound by residues 29-32 (TMGP), lysine 50, 86-90 (DGTTT), glycine 414, 477-479 (NAA), and aspartate 493.

This sequence belongs to the chaperonin (HSP60) family. As to quaternary structure, forms a cylinder of 14 subunits composed of two heptameric rings stacked back-to-back. Interacts with the co-chaperonin GroES.

The protein localises to the cytoplasm. It catalyses the reaction ATP + H2O + a folded polypeptide = ADP + phosphate + an unfolded polypeptide.. In terms of biological role, together with its co-chaperonin GroES, plays an essential role in assisting protein folding. The GroEL-GroES system forms a nano-cage that allows encapsulation of the non-native substrate proteins and provides a physical environment optimized to promote and accelerate protein folding. The chain is Chaperonin GroEL from Sulfurimonas denitrificans (strain ATCC 33889 / DSM 1251) (Thiomicrospira denitrificans (strain ATCC 33889 / DSM 1251)).